The following is a 238-amino-acid chain: Large ribosomal subunit protein uL5c (238 aa).

The protein belongs to the universal ribosomal protein uL5 family. As to quaternary structure, part of the 50S ribosomal subunit; contacts the 5S rRNA.

It localises to the plastid. It is found in the chloroplast. In terms of biological role, binds 5S rRNA, forms part of the central protuberance of the 50S subunit. The chain is Large ribosomal subunit protein uL5c (rpl5) from Phaeodactylum tricornutum (strain CCAP 1055/1).